The sequence spans 223 residues: Putative 3-methyladenine DNA glycosylase (223 aa).

The protein belongs to the DNA glycosylase MPG family.

This chain is Putative 3-methyladenine DNA glycosylase, found in Pseudomonas syringae pv. tomato (strain ATCC BAA-871 / DC3000).